Here is a 663-residue protein sequence, read N- to C-terminus: Subtilisin-like serine protease (663 aa).

A signal peptide spans 1–23 (MKKFGAVVLALFLVGLMAGSVLA). Positions 24–136 (APQKPAVRNV…IQEDYVVKVA (113 aa)) are cleaved as a propeptide — removed in mature form. Positions 139-439 (TEGLDESAAQ…AGRVNAYKAA (301 aa)) constitute a Peptidase S8 domain. Catalysis depends on charge relay system residues aspartate 170, histidine 203, and serine 382. Residues proline 420, isoleucine 423, aspartate 483, leucine 484, aspartate 485, aspartate 497, tyrosine 498, threonine 501, and glutamate 507 each contribute to the Ca(2+) site. Positions 537–565 (VSDGSLGQPSGGGSEPSPSPSPEPTVDEK) are disordered. Positions 563–663 (DEKTFTGTVH…YQLDAKVYYG (101 aa)) are cleaved as a propeptide — removed in mature form.

This sequence belongs to the peptidase S8 family. Monomer.

It carries out the reaction Hydrolysis of proteins with broad specificity for peptide bonds, and a preference for a large uncharged residue in P1. Hydrolyzes peptide amides.. Its activity is regulated as follows. Resistant to treatment with 5% SDS, 8 M urea, 10% Triton X-100 or 10% Tween-20. Fully active although less stable in the presence of 10 mM EDTA. Activity not affected by the absence or presence of 10 mM CaCl(2). Unstable in the presence of 2 M or over GdnHCl and loses 35% and 99% of its activity upon incubation with 2 and 4 M GdnHCl, respectively, for 1 hour at 55 degrees Celsius. Nearly fully loses activity upon incubation at pH 2.0. Serine protease with a broad substrate specificity. This is Subtilisin-like serine protease from Thermococcus kodakarensis (strain ATCC BAA-918 / JCM 12380 / KOD1) (Pyrococcus kodakaraensis (strain KOD1)).